Consider the following 89-residue polypeptide: Small ribosomal subunit protein uS15 (89 aa).

The protein belongs to the universal ribosomal protein uS15 family. Part of the 30S ribosomal subunit. Forms a bridge to the 50S subunit in the 70S ribosome, contacting the 23S rRNA.

In terms of biological role, one of the primary rRNA binding proteins, it binds directly to 16S rRNA where it helps nucleate assembly of the platform of the 30S subunit by binding and bridging several RNA helices of the 16S rRNA. Forms an intersubunit bridge (bridge B4) with the 23S rRNA of the 50S subunit in the ribosome. This chain is Small ribosomal subunit protein uS15, found in Chromobacterium violaceum (strain ATCC 12472 / DSM 30191 / JCM 1249 / CCUG 213 / NBRC 12614 / NCIMB 9131 / NCTC 9757 / MK).